We begin with the raw amino-acid sequence, 316 residues long: tRNA dimethylallyltransferase (316 aa).

17-24 (GPTASGKT) serves as a coordination point for ATP. 19 to 24 (TASGKT) is a binding site for substrate. Interaction with substrate tRNA regions lie at residues 42 to 45 (DSAL), 166 to 170 (QRLSR), and 247 to 252 (RCVGYR).

Belongs to the IPP transferase family. Monomer. Requires Mg(2+) as cofactor.

It carries out the reaction adenosine(37) in tRNA + dimethylallyl diphosphate = N(6)-dimethylallyladenosine(37) in tRNA + diphosphate. Its function is as follows. Catalyzes the transfer of a dimethylallyl group onto the adenine at position 37 in tRNAs that read codons beginning with uridine, leading to the formation of N6-(dimethylallyl)adenosine (i(6)A). In Erwinia tasmaniensis (strain DSM 17950 / CFBP 7177 / CIP 109463 / NCPPB 4357 / Et1/99), this protein is tRNA dimethylallyltransferase.